The following is a 270-amino-acid chain: tRNA 2-(methylsulfanyl)-N(6)-isopentenyladenosine(37) hydroxylase (270 aa).

Fe cation is bound by residues Glu59, Glu137, His140, Glu190, Glu219, and His222.

It belongs to the MiaE family. In terms of assembly, monomer. Requires Fe cation as cofactor.

The catalysed reaction is 2-methylsulfanyl-N(6)-dimethylallyladenosine(37) in tRNA + AH2 + O2 = N(6)-[(2E)-4-hydroxy-3-methylbut-2-en-1-yl]-2-(methylsulfanyl)adenosine(37) in tRNA + A + H2O. It participates in tRNA modification; 2-methylthio-N-6-(cis-hydroxy)isopentenyl adenosine-tRNA biosynthesis. Functionally, involved in specific tRNA modification. Catalyzes the oxygen-dependent hydroxylation of 2-methylthio-N-6-isopentenyl adenosine (ms2i6A) to produce 2-methylthio-N-6-(cis-hydroxy)isopentenyl adenosine (ms2io6A) at position 37 in tRNAs. Can also use N6-(dimethylallyl)adenosine (i6A) as substrate, with lower efficiency. The presence of the hydroxyl group on the tRNA may regulate the ability of S.typhimurium to grow on the citric acid cycle (CAC) intermediates succinate, fumarate and malate. The chain is tRNA 2-(methylsulfanyl)-N(6)-isopentenyladenosine(37) hydroxylase from Salmonella typhimurium (strain LT2 / SGSC1412 / ATCC 700720).